The sequence spans 128 residues: Aspartate 1-decarboxylase (128 aa).

The active-site Schiff-base intermediate with substrate; via pyruvic acid is the S25. Pyruvic acid (Ser) is present on S25. T57 provides a ligand contact to substrate. Residue Y58 is the Proton donor of the active site. 73–75 provides a ligand contact to substrate; that stretch reads GSA.

Belongs to the PanD family. Heterooctamer of four alpha and four beta subunits. The cofactor is pyruvate. Is synthesized initially as an inactive proenzyme, which is activated by self-cleavage at a specific serine bond to produce a beta-subunit with a hydroxyl group at its C-terminus and an alpha-subunit with a pyruvoyl group at its N-terminus.

The protein resides in the cytoplasm. The enzyme catalyses L-aspartate + H(+) = beta-alanine + CO2. It participates in cofactor biosynthesis; (R)-pantothenate biosynthesis; beta-alanine from L-aspartate: step 1/1. In terms of biological role, catalyzes the pyruvoyl-dependent decarboxylation of aspartate to produce beta-alanine. The polypeptide is Aspartate 1-decarboxylase (Burkholderia thailandensis (strain ATCC 700388 / DSM 13276 / CCUG 48851 / CIP 106301 / E264)).